The following is a 60-amino-acid chain: Conotoxin VnMRCL-012 (60 aa).

The N-terminal stretch at 1 to 22 (MRCLPVFVILLLLIASAPGVDA) is a signal peptide. Positions 23–50 (QPKTKYDVPLASRHDFAKKTPKRLSKPR) are excised as a propeptide.

It belongs to the conotoxin T superfamily. In terms of processing, contains 2 disulfide bonds that can be either 'C1-C3, C2-C4' or 'C1-C4, C2-C3', since these disulfide connectivities have been observed for conotoxins with cysteine framework V (for examples, see AC P0DQQ7 and AC P81755). Expressed by the venom duct.

It localises to the secreted. This Conus ventricosus (Mediterranean cone) protein is Conotoxin VnMRCL-012.